Consider the following 248-residue polypeptide: Ras-related protein Rab-28 (248 aa).

The segment at 1-30 (MTTMGEDEAPALPKKSPLPEKIDEADVDDD) is disordered. Residue 42-50 (GDGASGKTS) coordinates GTP. An Effector region motif is present at residues 64–72 (YHQTLGLDF). GTP contacts are provided by residues 91–95 (DIGGQ), 152–155 (NKTD), and 182–184 (SAK). Residues 227–248 (QSDASYARRSDQSRSTSVCSIT) are disordered. Residues 239–248 (SRSTSVCSIT) are compositionally biased toward polar residues.

Belongs to the small GTPase superfamily. Rab family. Expressed in amphid and phasmid ciliated sensory neurons.

The protein resides in the cell projection. Its subcellular location is the cilium membrane. It localises to the perikaryon. It is found in the cytoplasm. The protein localises to the cytoskeleton. The protein resides in the cilium axoneme. In terms of biological role, GTPase. Intraflagellar transport (IFT) cargo that undergoes bidirectional IFT along the ciliary axoneme when in active GTP-bound state in amphid and phasmid ciliated sensory neurons. Targeting and function as IFT cargo may depend on the BBSome, an IFT cargo adapter. Does not undergo IFT when in inactive GDP-bound state. May in turn play a role in cilium structure and/or function in ciliated sensory neurons. The protein is Ras-related protein Rab-28 of Caenorhabditis elegans.